A 72-amino-acid polypeptide reads, in one-letter code: Cytochrome c oxidase subunit 2 (72 aa).

At 1–14 the chain is on the mitochondrial intermembrane side; it reads MAHPSQLGFQDAAS. A helical transmembrane segment spans residues 15–45; that stretch reads PVMEELLHFHDHALMIVFLISTLVLYIIVAM. Residues 46–72 are Mitochondrial matrix-facing; the sequence is VSTKLTNKYXLDSQEIEVIWTXLPAVI.

Belongs to the cytochrome c oxidase subunit 2 family. In terms of assembly, component of the cytochrome c oxidase (complex IV, CIV), a multisubunit enzyme composed of 14 subunits. The complex is composed of a catalytic core of 3 subunits MT-CO1, MT-CO2 and MT-CO3, encoded in the mitochondrial DNA, and 11 supernumerary subunits COX4I, COX5A, COX5B, COX6A, COX6B, COX6C, COX7A, COX7B, COX7C, COX8 and NDUFA4, which are encoded in the nuclear genome. The complex exists as a monomer or a dimer and forms supercomplexes (SCs) in the inner mitochondrial membrane with NADH-ubiquinone oxidoreductase (complex I, CI) and ubiquinol-cytochrome c oxidoreductase (cytochrome b-c1 complex, complex III, CIII), resulting in different assemblies (supercomplex SCI(1)III(2)IV(1) and megacomplex MCI(2)III(2)IV(2)). Found in a complex with TMEM177, COA6, COX18, COX20, SCO1 and SCO2. Interacts with TMEM177 in a COX20-dependent manner. Interacts with COX20. Interacts with COX16. Cu cation is required as a cofactor.

It is found in the mitochondrion inner membrane. The catalysed reaction is 4 Fe(II)-[cytochrome c] + O2 + 8 H(+)(in) = 4 Fe(III)-[cytochrome c] + 2 H2O + 4 H(+)(out). Functionally, component of the cytochrome c oxidase, the last enzyme in the mitochondrial electron transport chain which drives oxidative phosphorylation. The respiratory chain contains 3 multisubunit complexes succinate dehydrogenase (complex II, CII), ubiquinol-cytochrome c oxidoreductase (cytochrome b-c1 complex, complex III, CIII) and cytochrome c oxidase (complex IV, CIV), that cooperate to transfer electrons derived from NADH and succinate to molecular oxygen, creating an electrochemical gradient over the inner membrane that drives transmembrane transport and the ATP synthase. Cytochrome c oxidase is the component of the respiratory chain that catalyzes the reduction of oxygen to water. Electrons originating from reduced cytochrome c in the intermembrane space (IMS) are transferred via the dinuclear copper A center (CU(A)) of subunit 2 and heme A of subunit 1 to the active site in subunit 1, a binuclear center (BNC) formed by heme A3 and copper B (CU(B)). The BNC reduces molecular oxygen to 2 water molecules using 4 electrons from cytochrome c in the IMS and 4 protons from the mitochondrial matrix. In Gomphosus varius (Bird wrasse), this protein is Cytochrome c oxidase subunit 2 (mt-co2).